Reading from the N-terminus, the 274-residue chain is Protein LIKE COV 3 (274 aa).

Topologically, residues 1–60 are cytoplasmic; that stretch reads METRERDLERLIPMHKSGASPRDVVLSVPPSPLASPIHVAGKEAIYKVIRSWASKKFMTG. A helical transmembrane segment spans residues 61-81; sequence CVILLPIAVTFYFTWWFIHFV. At 82 to 93 the chain is on the extracellular side; sequence DGFFSPIYTHLG. Residues 94–114 traverse the membrane as a helical segment; that stretch reads INMFGLGFVTSITFIFMVGVF. At 115–274 the chain is on the cytoplasmic side; it reads MSSWLGASVL…VCLSLVLAWT (160 aa).

It belongs to the plant COV1 protein family.

The protein resides in the membrane. This chain is Protein LIKE COV 3, found in Arabidopsis thaliana (Mouse-ear cress).